The sequence spans 356 residues: Fe(3+) ions import ATP-binding protein FbpC 2 (356 aa).

The ABC transporter domain maps to 12-246 (LTVKNLNKFF…PNHLETAKFM (235 aa)). 44-51 (GSSGCGKT) contacts ATP.

Belongs to the ABC transporter superfamily. Fe(3+) ion importer (TC 3.A.1.10) family. As to quaternary structure, the complex is composed of two ATP-binding proteins (FbpC), two transmembrane proteins (FbpB) and a solute-binding protein (FbpA).

The protein resides in the cell inner membrane. It catalyses the reaction Fe(3+)(out) + ATP + H2O = Fe(3+)(in) + ADP + phosphate + H(+). Its function is as follows. Part of the ABC transporter complex FbpABC involved in Fe(3+) ions import. Responsible for energy coupling to the transport system. The polypeptide is Fe(3+) ions import ATP-binding protein FbpC 2 (Haemophilus influenzae (strain ATCC 51907 / DSM 11121 / KW20 / Rd)).